The sequence spans 190 residues: Holliday junction branch migration complex subunit RuvA (190 aa).

The domain I stretch occupies residues 1–64; it reads MIGRISGQLA…EDAQILYGFG (64 aa). The tract at residues 65–137 is domain II; the sequence is SATERAAFRQ…LKGKLGADIG (73 aa). Positions 137-141 are flexible linker; the sequence is GVQVS. A domain III region spans residues 142-190; it reads VSSDSQSDILQALVALGYSDRDAALALKALPKDIGVSDGIKLALKALAK.

Belongs to the RuvA family. In terms of assembly, homotetramer. Forms an RuvA(8)-RuvB(12)-Holliday junction (HJ) complex. HJ DNA is sandwiched between 2 RuvA tetramers; dsDNA enters through RuvA and exits via RuvB. An RuvB hexamer assembles on each DNA strand where it exits the tetramer. Each RuvB hexamer is contacted by two RuvA subunits (via domain III) on 2 adjacent RuvB subunits; this complex drives branch migration. In the full resolvosome a probable DNA-RuvA(4)-RuvB(12)-RuvC(2) complex forms which resolves the HJ.

The protein resides in the cytoplasm. Its function is as follows. The RuvA-RuvB-RuvC complex processes Holliday junction (HJ) DNA during genetic recombination and DNA repair, while the RuvA-RuvB complex plays an important role in the rescue of blocked DNA replication forks via replication fork reversal (RFR). RuvA specifically binds to HJ cruciform DNA, conferring on it an open structure. The RuvB hexamer acts as an ATP-dependent pump, pulling dsDNA into and through the RuvAB complex. HJ branch migration allows RuvC to scan DNA until it finds its consensus sequence, where it cleaves and resolves the cruciform DNA. The polypeptide is Holliday junction branch migration complex subunit RuvA (Polaromonas sp. (strain JS666 / ATCC BAA-500)).